Reading from the N-terminus, the 367-residue chain is Glutamate 5-kinase (367 aa).

Residue lysine 10 coordinates ATP. Positions 50, 137, and 149 each coordinate substrate. Residues 169-170 (TD) and 211-217 (TGGMSTK) each bind ATP. Residues 275–353 (AGIITIDAGA…QDIEQVLGYE (79 aa)) enclose the PUA domain.

It belongs to the glutamate 5-kinase family.

It is found in the cytoplasm. The enzyme catalyses L-glutamate + ATP = L-glutamyl 5-phosphate + ADP. Its pathway is amino-acid biosynthesis; L-proline biosynthesis; L-glutamate 5-semialdehyde from L-glutamate: step 1/2. In terms of biological role, catalyzes the transfer of a phosphate group to glutamate to form L-glutamate 5-phosphate. This Pasteurella multocida (strain Pm70) protein is Glutamate 5-kinase.